Consider the following 238-residue polypeptide: Ribonuclease PH (238 aa).

Phosphate is bound by residues arginine 86 and 124–126 (GTR).

This sequence belongs to the RNase PH family. As to quaternary structure, homohexameric ring arranged as a trimer of dimers.

The catalysed reaction is tRNA(n+1) + phosphate = tRNA(n) + a ribonucleoside 5'-diphosphate. In terms of biological role, phosphorolytic 3'-5' exoribonuclease that plays an important role in tRNA 3'-end maturation. Removes nucleotide residues following the 3'-CCA terminus of tRNAs; can also add nucleotides to the ends of RNA molecules by using nucleoside diphosphates as substrates, but this may not be physiologically important. Probably plays a role in initiation of 16S rRNA degradation (leading to ribosome degradation) during starvation. The protein is Ribonuclease PH of Enterobacter sp. (strain 638).